Consider the following 449-residue polypeptide: Phosphoglucosamine mutase (449 aa).

The active-site Phosphoserine intermediate is the S100. Mg(2+)-binding residues include S100, D241, D243, and D245. S100 is modified (phosphoserine).

This sequence belongs to the phosphohexose mutase family. Mg(2+) serves as cofactor. In terms of processing, activated by phosphorylation.

It catalyses the reaction alpha-D-glucosamine 1-phosphate = D-glucosamine 6-phosphate. In terms of biological role, catalyzes the conversion of glucosamine-6-phosphate to glucosamine-1-phosphate. The sequence is that of Phosphoglucosamine mutase from Caldicellulosiruptor bescii (strain ATCC BAA-1888 / DSM 6725 / KCTC 15123 / Z-1320) (Anaerocellum thermophilum).